Consider the following 699-residue polypeptide: MAEGEDVPPLPTSSGDGWEKDLEEALEAGGCDLETLRNIIQGRPLPADLRAKVWKIALNVAGKGDSLASWDGILDLPEQNTIHKDCLQFIDQLSVPEEKAAELLLDIESVITFYCKSRNIKYSTSLSWIHLLKPLVHLQLPRSDLYNCFYAIMNKYIPRDCSQKGRPFHLFRLLIQYHEPELCSYLDTKKITPDSYALNWLGSLFACYCSTEVTQAIWDGYLQQADPFFIYFLMLIILVNAKEVILTQESDSKEEVIKFLENTPSSLNIEDIEDLFSLAQYYCSKTPASFRKDNHHLFGSTLLGIKDDDADLSQALCLAISVSEILQANQLQGEGVRFFVVDCRPAEQYNAGHLSTAFHLDSDLMLQNPSEFAQSVKSLLEAQKQSIESGSIAGGEHLCFMGSGREEEDMYMNMVLAHFLQKNKEYVSIASGGFMALQQHLADINVDGPENGYGHWIASTSGSRSSINSVDGESPNGSSDRGMKSLVNKMTVALKTKSVNVREKVISFIENTSTPVDRMSFNLPWPDRSCTERHVSSSDRVGKPYRGVKPVFSIGDEEEYDTDEIDSSSMSDDDRKEVVNIQTWINKPDVKHHFPCKEVKESGHMFPSHLLVTATHMYCLREIVSRKGLAYIQSRQALNSVVKITSKKKHPELITFKYGNSSASGIEILAIERYLIPNAGDATKAIKQQIMKVLDALES.

The Rab-GAP TBC domain maps to 44–225 (PLPADLRAKV…AIWDGYLQQA (182 aa)). S300 is modified (phosphoserine). Positions 334 to 446 (EGVRFFVVDC…LQQHLADINV (113 aa)) constitute a Rhodanese domain. A compositionally biased stretch (polar residues) spans 459–479 (STSGSRSSINSVDGESPNGSS). Residues 459–483 (STSGSRSSINSVDGESPNGSSDRGM) are disordered. 3 positions are modified to phosphoserine: S469, S474, and S507. The residue at position 514 (T514) is a Phosphothreonine. Residues 514–573 (TPVDRMSFNLPWPDRSCTERHVSSSDRVGKPYRGVKPVFSIGDEEEYDTDEIDSSSMSDD) are may mediate the interaction with C17orf75, FAM91A1 and WDR11. The tract at residues 514 to 699 (TPVDRMSFNL…IMKVLDALES (186 aa)) is may mediate the interaction with WASHC1. 2 positions are modified to phosphoserine: S520 and S571. Residues 574–699 (DRKEVVNIQT…IMKVLDALES (126 aa)) form a may mediate the interaction with FKBP15 and WASHC2; required for endosome to Golgi trafficking region.

Directly interacts with GOLGA1 and GOLGA4. Interacts with FAM91A1, C17ORF75 and WDR11; the interaction recruits TBC1D23 to AP-1-derived vesicles. Directly interacts with WASHC1 and WASHC2A/FAM21A. Interacts with FKBP15. Isoform 1: Widely expressed, including in fetal adult brain (corpus callosum, pons, cerebellum), spinal cord, heart, skeletal muscle, thymus and bone marrow, and at lower levels in spleen. Hardly detected in liver, kidney, colon and testis. Isoform 2: Expressed at high levels in liver, kidney, colon and testis. Hardly detected in tissues expressing high levels of isoform 1. Expressed at low levels in spleen.

The protein resides in the golgi apparatus. The protein localises to the trans-Golgi network. Its subcellular location is the cytoplasmic vesicle. Functionally, putative Rab GTPase-activating protein which plays a role in vesicular trafficking. Involved in endosome-to-Golgi trafficking. Acts as a bridging protein by binding simultaneously to golgins, including GOLGA1 and GOLGA4, located at the trans-Golgi, and to the WASH complex, located on endosome-derived vesicles. Together with WDR11 complex facilitates the golgin-mediated capture of vesicles generated using AP-1. Plays a role in brain development, including in cortical neuron positioning. May also be important for neurite outgrowth, possibly through its involvement in membrane trafficking and cargo delivery, 2 processes that are essential for axonal and dendritic growth. May act as a general inhibitor of innate immunity signaling, strongly inhibiting multiple TLR and dectin/CLEC7A-signaling pathways. Does not alter initial activation events, but instead affects maintenance of inflammatory gene expression several hours after bacterial lipopolysaccharide (LPS) challenge. In Homo sapiens (Human), this protein is TBC1 domain family member 23 (TBC1D23).